A 192-amino-acid polypeptide reads, in one-letter code: Transcriptional activator GvpE (192 aa).

Position 140–145 (140–145) interacts with DNA; it reads KRKVYR. Residues 150–181 are leucine-zipper; sequence EATFDTVEPAVNRLVTFSLVLKALMIDCNARY.

In terms of assembly, interacts with GvpD, also with c-GvpD from H.salinarum.

It localises to the cytoplasm. Its activity is regulated as follows. The amount of protein that accumulates is controlled by GvpD; GvpD causes a reduction in the amount of GvpE, preventing accumulation of excessive amounts of gas vesicles. In terms of biological role, plays a regulatory role in gas vesicle synthesis, activates transcription of the gvpA operon, and probably of the gvpD operon. Gas vesicles are hollow, gas filled proteinaceous nanostructures found in some microorganisms. They allow positioning of halobacteria at the optimal depth for growth in the poorly aerated, shallow brine pools of their habitat. Functionally, expression of a 9.5 kb mc-vac DNA fragment containing 2 divergently transcribed regions (gvpD-gvpE-gvpF-gvpG-gvpH-gvpI-gvpJ-gvpK-gvpL-gvpM and gvpA-gvpC-gvpN-gvpO) allows H.volcanii to produce gas vesicles. In Haloferax mediterranei (strain ATCC 33500 / DSM 1411 / JCM 8866 / NBRC 14739 / NCIMB 2177 / R-4) (Halobacterium mediterranei), this protein is Transcriptional activator GvpE.